The sequence spans 490 residues: Transcription factor MYB101 (490 aa).

The interval 1–21 (MDGGGETTATATMEGRGLKKG) is disordered. 2 HTH myb-type domains span residues 15–67 (GRGL…ANHL) and 68–122 (RPNL…KRRQ). 2 consecutive DNA-binding regions (H-T-H motif) follow at residues 43-67 (WNAV…ANHL) and 95-118 (WARM…NTRM). Residues 168–206 (YTNSSNTSSSSSSFSSSSSQPSKRLRPDPLVSTNPGLNP) form a disordered region. A compositionally biased stretch (low complexity) spans 169–186 (TNSSNTSSSSSSFSSSSS).

As to expression, present mostly in flowers, siliques and floral shoot tips. Expression is restricted to the subapical pith cells of both vegetative and flowering plants and to the hypocotyl hook. Expressed in pollen grains and pollen tube. Mostly expressed in mature pollen grains, and, to a lower extent, in inflorescences and siliques.

It is found in the nucleus. In terms of biological role, transcription activator. Binds to 5'-CAACTGTC-3' and/or 5'-TAACAAA-3' motif in target gene promoter (e.g. alpha-amylase) to promote their expression. Positive regulator of abscisic acid (ABA) responses leading to growth arrest during seed germination. Promotes the expression of aleurone-related genes (e.g. CP1, CP, GASA1, BXL1 and BXL2) in seeds. Together with MYB33 and MYB65, promotes the programmed cell death (PCD) leading to vacuolation of protein storage vacuoles (PSVs) in the aleurone layers during seed germination. Maybe involved in the regulation of leaves lamina morphogenesis. Involved in pollen grain development. Together with MYB97 and MYB120, functions as a male factor that controls pollen tube-synergid interaction in fertilization. Required for pollen tube growth arrest and sperm cell release in the female gametophyte, probably via the regulation of pollen tube-specific gene expression. This Arabidopsis thaliana (Mouse-ear cress) protein is Transcription factor MYB101.